We begin with the raw amino-acid sequence, 397 residues long: Urea transporter 2 (397 aa).

5 consecutive transmembrane segments (helical) span residues 68 to 85, 92 to 109, 115 to 135, 143 to 163, and 172 to 192; these read VMFVNNPLSGILIVIGLF, AIAGCLGTVMSTLTALIL, AIASGLHGYNGVLVGLLIAVF, WWLLLPVIVMSMSCPILSSAL, and LPVFTLPFNIAVTLYLAATGH. The N-linked (GlcNAc...) asparagine glycan is linked to asparagine 210. The next 5 helical transmembrane spans lie at 239–257, 264–280, 287–303, 309–329, and 331–351; these read WTGGIFLIALFISSPLICL, TMGMLAALTIATPFDSI, FNSTLACIAVGGMFYVI, LLAVACALFAAYVGAALTNVL, and VFGLPTCTWPFCISALIFLLL.

This sequence belongs to the urea transporter family. As to expression, kidney.

It localises to the apical cell membrane. The protein resides in the basolateral cell membrane. The enzyme catalyses urea(in) = urea(out). With respect to regulation, inhibited by urea analogs and phloretin. In terms of biological role, mediates the transport of urea driven by a concentration gradient across the cell membrane of the renal inner medullary collecting duct which is critical to the urinary concentrating mechanism. This chain is Urea transporter 2 (SLC14A2), found in Oryctolagus cuniculus (Rabbit).